The primary structure comprises 299 residues: Acetylglutamate kinase (299 aa).

Residues 62 to 63 (GG), Arg-84, and Asn-188 contribute to the substrate site.

It belongs to the acetylglutamate kinase family. ArgB subfamily.

It localises to the cytoplasm. The enzyme catalyses N-acetyl-L-glutamate + ATP = N-acetyl-L-glutamyl 5-phosphate + ADP. It functions in the pathway amino-acid biosynthesis; L-arginine biosynthesis; N(2)-acetyl-L-ornithine from L-glutamate: step 2/4. Catalyzes the ATP-dependent phosphorylation of N-acetyl-L-glutamate. This chain is Acetylglutamate kinase, found in Methanosarcina acetivorans (strain ATCC 35395 / DSM 2834 / JCM 12185 / C2A).